The chain runs to 403 residues: Ribonuclease T2-like (403 aa).

Residues 1–19 (MLALILTISICIFLKGSTC) form the signal peptide. Disulfide bonds link Cys-36–Cys-55, Cys-44–Cys-91, Cys-54–Cys-158, and Cys-99–Cys-150. N-linked (GlcNAc...) asparagine glycosylation is present at Asn-78. Active-site residues include His-84, Glu-143, and His-147. An N-linked (GlcNAc...) asparagine glycan is attached at Asn-175. Cys-224 and Cys-259 form a disulfide bridge. A disordered region spans residues 268 to 288 (PKNGFNPGPQPPKSPRKGYLE).

This sequence belongs to the RNase T2 family.

It localises to the vacuole lumen. Its subcellular location is the cytoplasm. The catalysed reaction is a ribonucleotidyl-ribonucleotide-RNA + H2O = a 3'-end 3'-phospho-ribonucleotide-RNA + a 5'-end dephospho-ribonucleoside-RNA + H(+). Functionally, rnase which modulates cell survival under stress conditions. Released from the vacuole to the cytoplasm during stress to promote tRNA and rRNA cleavage and to activate separately a downstream pathway that promotes cell death. Involved in cell size, vacuolar morphology and growth at high temperatures and high salt concentration. The sequence is that of Ribonuclease T2-like (RNY1) from Debaryomyces hansenii (strain ATCC 36239 / CBS 767 / BCRC 21394 / JCM 1990 / NBRC 0083 / IGC 2968) (Yeast).